The chain runs to 250 residues: Vitamin B12 import ATP-binding protein BtuD (250 aa).

The ABC transporter domain occupies 3–233 (LRQASVLPRL…EVLSPVFGVA (231 aa)). 29-36 (GPNGAGKS) is an ATP binding site.

Belongs to the ABC transporter superfamily. Vitamin B12 importer (TC 3.A.1.13.1) family. As to quaternary structure, the complex is composed of two ATP-binding proteins (BtuD), two transmembrane proteins (BtuC) and a solute-binding protein (BtuF).

It is found in the cell inner membrane. The enzyme catalyses an R-cob(III)alamin(out) + ATP + H2O = an R-cob(III)alamin(in) + ADP + phosphate + H(+). Part of the ABC transporter complex BtuCDF involved in vitamin B12 import. Responsible for energy coupling to the transport system. The polypeptide is Vitamin B12 import ATP-binding protein BtuD (Pectobacterium atrosepticum (strain SCRI 1043 / ATCC BAA-672) (Erwinia carotovora subsp. atroseptica)).